A 50-amino-acid chain; its full sequence is HIRNHFGSKPFKCNKCSYSCVNKSMLNSHLKSHSNVYQYRCADCAYATKY.

C2H2-type zinc fingers lie at residues 1–5 (HIRNH), 11–33 (FKCN…LKSH), and 39–50 (YRCADCAYATKY).

The protein belongs to the hunchback C2H2-type zinc-finger protein family.

Its subcellular location is the nucleus. Gap class segmentation protein that controls development of head structures. This is Protein hunchback (hb) from Schultesia lampyridiformis (Firefly mimic roach).